The following is a 161-amino-acid chain: MIIQKILQGAVLDIVQKKLVDKLASNKQFQQMSVQFKDKMDEITGEKPAKRNIHGHNNHTRSSNHPHSGAHSNINHNNNNNINFQNVKYTNDIHENARIYEQQRRLQQNGGGGDSSSSRSSNNNNSTNDNKPQSKNYFTHLFESFKEELNDEADKLNGKKK.

Disordered stretches follow at residues Lys-47–Asn-83 and Arg-104–Tyr-137. The span at Lys-50 to Asn-64 shows a compositional bias: basic residues. Low complexity-rich tracts occupy residues Asn-73–Asn-83 and Ser-115–Asn-130.

This is an uncharacterized protein from Dictyostelium discoideum (Social amoeba).